The chain runs to 53 residues: Mitochondrial sheath formation-associated protein (53 aa).

Mitochondrial intermembrane segments lie at residues 1–6 (MIVLGW) and 1–7 (MIVLGWM). Transmembrane regions (helical) follow at residues 7-23 (MLFV…PEAM) and 8-24 (LFVG…EAMP). Cytoplasmic-facing segments span residues 24 to 53 (PPTL…ELLL) and 25 to 40 (PTLK…ENKA).

In terms of assembly, interacts with VDAC3. Testis specific. Detected only in germ cells at the step of spermiogenesis (at protein level). Expressed during the middle steps of spermatid development. As to expression, testis specific. Detected only in germ cells at the step of spermiogenesis (at protein level). Expressed in the late steps of spermatid development.

It is found in the mitochondrion outer membrane. Regulates sperm development. May be involved in mitochondrial sheath formation. The sequence is that of Mitochondrial sheath formation-associated protein from Mus musculus (Mouse).